Reading from the N-terminus, the 858-residue chain is MSVVGLDVGSQSCYIAVARAGGIETIANEFSDRCTPSVISFGSKNRTIGVAAKNQQITHANNTVSNFKRFHGRAFNDPFIQKEKENLSYDLVPLKNGGVGIKVMYMGEEHLFSVEQITAMLLTKLKETAENSLKKPVTDCVISVPSFFTDAERRSVLDAAQIVGLNCLRLMNDMTAVALNYGIYKQDLPSLDEKPRIVVFVDMGHSAFQVSACAFNKGKLKVLGTAFDPFLGGKNFDEKLVEHFCAEFKTKYKLDAKSKIRALLRLYQECEKLKKLMSSNSTDLPLNIECFMNDKDVSGKMNRSQFEELCAELLQKIEVPLYSLLEQTHLKVEDVSAVEIVGGATRIPAVKERIAKFFGKDISTTLNADEAVARGCALQCAILSPAFKVREFSVTDAVPFPISLIWNHDSEDTEGVHEVFSRNHAAPFSKVLTFLRRGPFELEAFYSDPQGVPYPEAKIGRFVVQNVSAQKDGEKSRVKVKVRVNTHGIFTISTASMVEKVPTEENEMSSEADMECLNQRPPENPDTDKNVQQDNSEAGTQPQVQTDAQQTSQSPPSPELTSEENKIPDADKANEKKVDQPPEAKKPKIKVVNVELPIEANLVWQLGKDLLNMYIETEGKMIMQDKLEKERNDAKNAVEEYVYEFRDKLCGPYEKFICEQDHQNFLRLLTETEDWLYEEGEDQAKQAYVDKLEELMKIGTPVKVRFQEAEERPKMFEELGQRLQHYAKIAADFRNKDEKYNHIDESEMKKVEKSVNEVMEWMNNVMNAQAKESLDQDPVVRAQEIKTKIKELNNTCEPVVTQPKPKIESPKLERTPNGPNIDKKEEDLEDKNNFGAEPPHQNGECYPNEKNSVNMDLD.

Position 2 is an N-acetylserine (Ser-2). Lys-471 is subject to N6-acetyllysine. 2 disordered regions span residues 500–584 and 796–858; these read KVPT…PPEA and CEPV…MDLD. A compositionally biased stretch (acidic residues) spans 504–514; the sequence is EENEMSSEADM. Phosphoserine is present on residues Ser-509 and Ser-510. The segment covering 532–554 has biased composition (polar residues); it reads QQDNSEAGTQPQVQTDAQQTSQS. Residue Ser-557 is modified to Phosphoserine. Position 561 is a phosphothreonine (Thr-561). Composition is skewed to basic and acidic residues over residues 563–584 and 805–814; these read EENK…PPEA and PKIESPKLER. The residue at position 809 (Ser-809) is a Phosphoserine. A Phosphothreonine modification is found at Thr-815. Residues 821-832 are compositionally biased toward basic and acidic residues; the sequence is IDKKEEDLEDKN. Positions 849–858 are enriched in polar residues; sequence EKNSVNMDLD.

It belongs to the heat shock protein 70 family. As to quaternary structure, interacts with HSPA8/HSC70. Interacts with HSPA1A (via NBD) and HSPA1B (via NBD). In terms of processing, phosphorylation on Ser-509 may be important for regulation of the HSPA8/HSC70 chaperone activity.

The protein resides in the cytoplasm. Acts as a nucleotide-exchange factor (NEF) for chaperone proteins HSPA1A and HSPA1B, promoting the release of ADP from HSPA1A/B thereby triggering substrate release. Prevents the aggregation of denatured proteins in cells under severe stress, on which the ATP levels decrease markedly. Inhibits HSPA8/HSC70 ATPase and chaperone activities. This is Heat shock protein 105 kDa (HSPH1) from Pongo abelii (Sumatran orangutan).